A 247-amino-acid polypeptide reads, in one-letter code: UDP-2,3-diacylglucosamine hydrolase (247 aa).

The Mn(2+) site is built by D8, H10, D41, N79, and H114. 79–80 (NR) lines the substrate pocket. Positions 122, 160, 171, 174, and 202 each coordinate substrate. Mn(2+) is bound by residues H202 and H204.

This sequence belongs to the LpxH family. Mn(2+) is required as a cofactor.

The protein localises to the cell inner membrane. The enzyme catalyses UDP-2-N,3-O-bis[(3R)-3-hydroxytetradecanoyl]-alpha-D-glucosamine + H2O = 2-N,3-O-bis[(3R)-3-hydroxytetradecanoyl]-alpha-D-glucosaminyl 1-phosphate + UMP + 2 H(+). The protein operates within glycolipid biosynthesis; lipid IV(A) biosynthesis; lipid IV(A) from (3R)-3-hydroxytetradecanoyl-[acyl-carrier-protein] and UDP-N-acetyl-alpha-D-glucosamine: step 4/6. Functionally, hydrolyzes the pyrophosphate bond of UDP-2,3-diacylglucosamine to yield 2,3-diacylglucosamine 1-phosphate (lipid X) and UMP by catalyzing the attack of water at the alpha-P atom. Involved in the biosynthesis of lipid A, a phosphorylated glycolipid that anchors the lipopolysaccharide to the outer membrane of the cell. The chain is UDP-2,3-diacylglucosamine hydrolase from Xanthomonas campestris pv. campestris (strain 8004).